Reading from the N-terminus, the 502-residue chain is uncharacterized protein (502 aa).

3 stretches are compositionally biased toward low complexity: residues 1 to 10, 28 to 47, and 155 to 171; these read MQSTTNNNTN, SNRSAYRSASKSASRSNNLS, and NTEDTNDDNSNSQSVNS. 4 disordered regions span residues 1–57, 155–181, 212–362, and 438–487; these read MQST…VISY, NTEDTNDDNSNSQSVNSRTDSDNLSAR, SLGN…TDKF, and TIDQ…TSNL. The segment covering 212-230 has biased composition (polar residues); it reads SLGNSERNSPDRPSTQGDS. 2 stretches are compositionally biased toward low complexity: residues 242–290 and 309–327; these read RNAS…SSRN and SNKNSASRNSASRNSTSIK. The span at 339–348 shows a compositional bias: polar residues; sequence QTNKSKNQRG. A compositionally biased stretch (low complexity) spans 446–460; it reads TSDKNNSTKSNTKYN. Residues 470–487 are compositionally biased toward polar residues; the sequence is SYGTSKRSHNRSSNTSNL.

It localises to the virion. This is an uncharacterized protein from Acanthamoeba polyphaga (Amoeba).